The primary structure comprises 405 residues: L-rhamnonate dehydratase (405 aa).

Residues His-33 and Arg-59 each contribute to the substrate site. The Mg(2+) site is built by Asp-226, Glu-252, and Glu-280. His-329 (proton acceptor) is an active-site residue. Glu-349 lines the substrate pocket.

The protein belongs to the mandelate racemase/muconate lactonizing enzyme family. RhamD subfamily. Homooctamer; tetramer of dimers. Mg(2+) is required as a cofactor.

It carries out the reaction L-rhamnonate = 2-dehydro-3-deoxy-L-rhamnonate + H2O. In terms of biological role, catalyzes the dehydration of L-rhamnonate to 2-keto-3-deoxy-L-rhamnonate (KDR). The polypeptide is L-rhamnonate dehydratase (Shigella boydii serotype 4 (strain Sb227)).